We begin with the raw amino-acid sequence, 483 residues long: GTPase Der (483 aa).

EngA-type G domains lie at 3-167 and 212-387; these read FTVA…GEER and LRIA…EIWN. GTP is bound by residues 9–16, 56–60, 119–122, 218–225, 265–269, and 330–333; these read GRPNVGKS, DTAGL, NKAE, GRPNAGKS, and NKWD. Positions 388–472 constitute a KH-like domain; that stretch reads RRVSTGRLNR…PIRLSLRTSD (85 aa).

Belongs to the TRAFAC class TrmE-Era-EngA-EngB-Septin-like GTPase superfamily. EngA (Der) GTPase family. As to quaternary structure, associates with the 50S ribosomal subunit.

GTPase that plays an essential role in the late steps of ribosome biogenesis. The polypeptide is GTPase Der (Brucella anthropi (strain ATCC 49188 / DSM 6882 / CCUG 24695 / JCM 21032 / LMG 3331 / NBRC 15819 / NCTC 12168 / Alc 37) (Ochrobactrum anthropi)).